We begin with the raw amino-acid sequence, 338 residues long: Glyceraldehyde-3-phosphate dehydrogenase (338 aa).

Residues 12-13 (RI), aspartate 34, and arginine 79 each bind NAD(+). D-glyceraldehyde 3-phosphate contacts are provided by residues 150-152 (SCT), threonine 181, 210-211 (TG), and arginine 233. Cysteine 151 (nucleophile) is an active-site residue. Asparagine 315 provides a ligand contact to NAD(+).

The protein belongs to the glyceraldehyde-3-phosphate dehydrogenase family. In terms of assembly, homotetramer.

It localises to the cytoplasm. The enzyme catalyses D-glyceraldehyde 3-phosphate + phosphate + NAD(+) = (2R)-3-phospho-glyceroyl phosphate + NADH + H(+). Its pathway is carbohydrate degradation; glycolysis; pyruvate from D-glyceraldehyde 3-phosphate: step 1/5. The protein is Glyceraldehyde-3-phosphate dehydrogenase (GPD) of Sordaria macrospora.